We begin with the raw amino-acid sequence, 594 residues long: DELLA protein 1 (594 aa).

The segment at 1–36 is disordered; that stretch reads MKREHQESFGGGVISNNNKTNTNHLNSSKNINFGEC. Positions 15-30 are enriched in low complexity; the sequence is SNNNKTNTNHLNSSKN. The DELLA motif signature appears at 61–65; it reads DELLA. A GRAS domain is found at 207-587; that stretch reads VDTQETGVRL…RSLIATSAWK (381 aa). Residues 214–268 are leucine repeat I (LRI); that stretch reads VRLVHTLMACAEAIQQKNLKLAEALVKHISLLASLQTGAMRKVASYFAQALARRI. The tract at residues 216-253 is required for possible homodimerization; sequence LVHTLMACAEAIQQKNLKLAEALVKHISLLASLQTGAM. The short motif at 221 to 225 is the LxCxE motif; degenerate element; it reads MACAE. Residues 285 to 350 form a VHIID region; sequence HMHFYESSPY…GGPPTFRLTG (66 aa). A VHIID motif is present at residues 316–320; that stretch reads VHVID. Positions 364 to 396 are leucine repeat II (LRII); the sequence is QVGWKLAQLAQTIGVQFEFRGFVCNSIADLDPN. The PFYRE stretch occupies residues 406 to 508; sequence VAVNSVFELH…EIYLGKQICN (103 aa). An LXXLL motif; degenerate motif is present at residues 414-418; it reads LHTML. An SAW region spans residues 511–587; it reads AYEGVDRVER…RSLIATSAWK (77 aa).

The protein belongs to the GRAS family. DELLA subfamily. As to quaternary structure, may be a homodimer. Post-translationally, ubiquitinated. Upon GA application it is ubiquitinated, leading to its subsequent degradation. As to expression, strongly expressed in the vascular tissue and endodermis but barely in the inner cortical cells where arbuscule are formed during arbuscular mycorrhizal (AM) symbiosis.

The protein resides in the nucleus. In terms of biological role, probable transcriptional regulator that acts as a repressor of the gibberellin (GA) signaling pathway. Probably acts by participating in large multiprotein complexes that repress transcription of GA-inducible genes. Upon GA application, it is degraded by the proteasome, allowing the GA signaling pathway. Together with DELLA2, required to enable arbuscule development during arbuscular mycorrhizal (AM) symbiosis with AM fungi (e.g. Glomus versiforme) via the regulation of RAM1 which, in turn, regulates various AM genes (e.g. NSP1, NSP2, PT4, LEC5, RAM2, EXO70I, STR and RAD1). In Medicago truncatula (Barrel medic), this protein is DELLA protein 1.